A 434-amino-acid chain; its full sequence is GTPase Obg (434 aa).

The region spanning 2–160 (PTFVDQTKIE…RVLRLELKLL (159 aa)) is the Obg domain. The OBG-type G domain maps to 161-334 (ADVGLVGFPS…LMNDTATLVE (174 aa)). Residues 167 to 174 (GFPSVGKS), 192 to 196 (FTTLT), 214 to 217 (DLPG), 284 to 287 (SQMD), and 315 to 317 (SSV) each bind GTP. 2 residues coordinate Mg(2+): Ser-174 and Thr-194. The OCT domain occupies 356–434 (YKAPQKNEFT…IGKFVFEFVQ (79 aa)).

This sequence belongs to the TRAFAC class OBG-HflX-like GTPase superfamily. OBG GTPase family. In terms of assembly, monomer. The cofactor is Mg(2+).

It is found in the cytoplasm. In terms of biological role, an essential GTPase which binds GTP, GDP and possibly (p)ppGpp with moderate affinity, with high nucleotide exchange rates and a fairly low GTP hydrolysis rate. Plays a role in control of the cell cycle, stress response, ribosome biogenesis and in those bacteria that undergo differentiation, in morphogenesis control. In Lactobacillus helveticus (strain DPC 4571), this protein is GTPase Obg.